Consider the following 677-residue polypeptide: Methionine--tRNA ligase (677 aa).

Positions 15-25 (PYANGSIHLGH) match the 'HIGH' region motif. 4 residues coordinate Zn(2+): cysteine 146, cysteine 149, cysteine 159, and cysteine 162. The short motif at 333 to 337 (KMSKS) is the 'KMSKS' region element. Lysine 336 is a binding site for ATP. A tRNA-binding domain is found at 575 to 677 (DFAKIDLRVA…SGAKPGQQVK (103 aa)).

Belongs to the class-I aminoacyl-tRNA synthetase family. MetG type 1 subfamily. In terms of assembly, homodimer. It depends on Zn(2+) as a cofactor.

It localises to the cytoplasm. The catalysed reaction is tRNA(Met) + L-methionine + ATP = L-methionyl-tRNA(Met) + AMP + diphosphate. In terms of biological role, is required not only for elongation of protein synthesis but also for the initiation of all mRNA translation through initiator tRNA(fMet) aminoacylation. This Cronobacter sakazakii (strain ATCC BAA-894) (Enterobacter sakazakii) protein is Methionine--tRNA ligase.